The primary structure comprises 497 residues: Probable cytosol aminopeptidase (497 aa).

2 residues coordinate Mn(2+): Lys262 and Asp267. The active site involves Lys274. The Mn(2+) site is built by Asp285, Asp344, and Glu346. Arg348 is a catalytic residue.

This sequence belongs to the peptidase M17 family. Mn(2+) is required as a cofactor.

It localises to the cytoplasm. It carries out the reaction Release of an N-terminal amino acid, Xaa-|-Yaa-, in which Xaa is preferably Leu, but may be other amino acids including Pro although not Arg or Lys, and Yaa may be Pro. Amino acid amides and methyl esters are also readily hydrolyzed, but rates on arylamides are exceedingly low.. The enzyme catalyses Release of an N-terminal amino acid, preferentially leucine, but not glutamic or aspartic acids.. Its function is as follows. Presumably involved in the processing and regular turnover of intracellular proteins. Catalyzes the removal of unsubstituted N-terminal amino acids from various peptides. The chain is Probable cytosol aminopeptidase from Rhizobium etli (strain ATCC 51251 / DSM 11541 / JCM 21823 / NBRC 15573 / CFN 42).